The chain runs to 235 residues: Uridylate kinase (235 aa).

8–11 (KFSG) contacts ATP. The segment at 16–21 (GAEGYG) is involved in allosteric activation by GTP. Position 50 (G50) interacts with UMP. Residues G51 and R55 each coordinate ATP. UMP-binding positions include D71 and 132–139 (TGNPYFTT). ATP contacts are provided by T159, Y165, and D168.

This sequence belongs to the UMP kinase family. Homohexamer.

It localises to the cytoplasm. It catalyses the reaction UMP + ATP = UDP + ADP. Its pathway is pyrimidine metabolism; CTP biosynthesis via de novo pathway; UDP from UMP (UMPK route): step 1/1. Its activity is regulated as follows. Allosterically activated by GTP. Inhibited by UTP. Functionally, catalyzes the reversible phosphorylation of UMP to UDP. The protein is Uridylate kinase of Aliarcobacter butzleri (strain RM4018) (Arcobacter butzleri).